Reading from the N-terminus, the 149-residue chain is Epoxide hydrolase EphG (149 aa).

Asp93 acts as the Proton donor in catalysis. Catalysis depends on Asp122, which acts as the Proton acceptor.

The protein belongs to the limonene-1,2-epoxide hydrolase family. In terms of assembly, homodimer. Is also present as monomer in solution.

It carries out the reaction an epoxide + H2O = an ethanediol. The catalysed reaction is 5,6alpha-epoxy-5alpha-cholestan-3beta-ol + H2O = 5alpha-cholestane-3beta,5,6beta-triol. It catalyses the reaction 5,6beta-epoxy-5beta-cholestan-3beta-ol + H2O = 5alpha-cholestane-3beta,5,6beta-triol. With respect to regulation, is inhibited by the anti-epileptic drug valpromide (Ki value of about 100 uM). In terms of biological role, epoxide hydrolase capable of hydrolyzing long or bulky lipophilic epoxides such as 9,10-epoxystearic acid and cholesterol 5,6-oxide in vitro. The physiological substrates have yet to be identified, but could be fatty acid or steroid derivatives. The sequence is that of Epoxide hydrolase EphG (ephG) from Mycobacterium tuberculosis (strain ATCC 25618 / H37Rv).